Here is a 257-residue protein sequence, read N- to C-terminus: UPF0246 protein BT_3869 (257 aa).

The protein belongs to the UPF0246 family.

The sequence is that of UPF0246 protein BT_3869 from Bacteroides thetaiotaomicron (strain ATCC 29148 / DSM 2079 / JCM 5827 / CCUG 10774 / NCTC 10582 / VPI-5482 / E50).